The chain runs to 411 residues: Pre-mRNA-splicing factor dre4 (411 aa).

Positions 3 to 36 (QPLPPGWTEHKAPSGIPYYWNAELKKSTYQRPSF) constitute a WW 1 domain. The interval 65 to 84 (NAEERKNSRDLRKQLPDRPK) is disordered. Over residues 66–83 (AEERKNSRDLRKQLPDRP) the composition is skewed to basic and acidic residues. The 34-residue stretch at 89-122 (IPNNDSWVVVFTKKNRYFFHNLKSHESYWEPPLE) folds into the WW 2 domain. Positions 138 to 209 (ISKDSSQSQN…KSHSAEELEF (72 aa)) are disordered. Positions 140–151 (KDSSQSQNVDSG) are enriched in polar residues. Positions 152 to 166 (KTNHEEIHESRHLQT) are enriched in basic and acidic residues. Residues 167–179 (EIEEPSGLEESSE) are compositionally biased toward acidic residues. In terms of domain architecture, FF spans 239 to 293 (TDDARRVFTELLKDKNIGAYQPWELVYPKLLDDDRFYVLDSGERRKEVFEEYCKS).

Component of the spliceosomal complex. Interacts with prp19.

Its subcellular location is the nucleus. In terms of biological role, component of the spliceosome involved in mRNA processing. The protein is Pre-mRNA-splicing factor dre4 (dre4) of Schizosaccharomyces pombe (strain 972 / ATCC 24843) (Fission yeast).